A 102-amino-acid chain; its full sequence is Large ribosomal subunit protein bL21 (102 aa).

The protein belongs to the bacterial ribosomal protein bL21 family. Part of the 50S ribosomal subunit. Contacts protein L20.

Its function is as follows. This protein binds to 23S rRNA in the presence of protein L20. This is Large ribosomal subunit protein bL21 from Bifidobacterium animalis subsp. lactis (strain AD011).